The chain runs to 252 residues: tRNA (guanine-N(1)-)-methyltransferase (252 aa).

Residues glycine 116 and 135–140 (LGDYVL) contribute to the S-adenosyl-L-methionine site.

It belongs to the RNA methyltransferase TrmD family. As to quaternary structure, homodimer.

It is found in the cytoplasm. It carries out the reaction guanosine(37) in tRNA + S-adenosyl-L-methionine = N(1)-methylguanosine(37) in tRNA + S-adenosyl-L-homocysteine + H(+). Its function is as follows. Specifically methylates guanosine-37 in various tRNAs. This Limosilactobacillus fermentum (strain NBRC 3956 / LMG 18251) (Lactobacillus fermentum) protein is tRNA (guanine-N(1)-)-methyltransferase.